The chain runs to 471 residues: ATP synthase subunit beta (471 aa).

Position 153-160 (153-160) interacts with ATP; that stretch reads GGAGVGKT.

Belongs to the ATPase alpha/beta chains family. F-type ATPases have 2 components, CF(1) - the catalytic core - and CF(0) - the membrane proton channel. CF(1) has five subunits: alpha(3), beta(3), gamma(1), delta(1), epsilon(1). CF(0) has four main subunits: a(1), b(1), b'(1) and c(9-12).

The protein localises to the cell membrane. It catalyses the reaction ATP + H2O + 4 H(+)(in) = ADP + phosphate + 5 H(+)(out). Functionally, produces ATP from ADP in the presence of a proton gradient across the membrane. The catalytic sites are hosted primarily by the beta subunits. This is ATP synthase subunit beta from Roseiflexus sp. (strain RS-1).